A 420-amino-acid polypeptide reads, in one-letter code: Glucose-1-phosphate adenylyltransferase (420 aa).

Residues Tyr97, Gly162, 177–178 (EK), and Ser188 contribute to the alpha-D-glucose 1-phosphate site.

This sequence belongs to the bacterial/plant glucose-1-phosphate adenylyltransferase family. In terms of assembly, homotetramer.

It carries out the reaction alpha-D-glucose 1-phosphate + ATP + H(+) = ADP-alpha-D-glucose + diphosphate. It participates in glycan biosynthesis; glycogen biosynthesis. In terms of biological role, involved in the biosynthesis of ADP-glucose, a building block required for the elongation reactions to produce glycogen. Catalyzes the reaction between ATP and alpha-D-glucose 1-phosphate (G1P) to produce pyrophosphate and ADP-Glc. This Pseudothermotoga lettingae (strain ATCC BAA-301 / DSM 14385 / NBRC 107922 / TMO) (Thermotoga lettingae) protein is Glucose-1-phosphate adenylyltransferase.